Reading from the N-terminus, the 490-residue chain is Argininosuccinate lyase (490 aa).

The protein belongs to the lyase 1 family. Argininosuccinate lyase subfamily.

Its subcellular location is the cytoplasm. It catalyses the reaction 2-(N(omega)-L-arginino)succinate = fumarate + L-arginine. It functions in the pathway amino-acid biosynthesis; L-arginine biosynthesis; L-arginine from L-ornithine and carbamoyl phosphate: step 3/3. The chain is Argininosuccinate lyase from Bifidobacterium longum (strain DJO10A).